The chain runs to 39 residues: Photosystem II reaction center protein Y (39 aa).

The helical transmembrane segment at 4 to 24 threads the bilayer; sequence RVIVVVSPLLIAATWAAINIG.

This sequence belongs to the PsbY family. In terms of assembly, PSII is composed of 1 copy each of membrane proteins PsbA, PsbB, PsbC, PsbD, PsbE, PsbF, PsbH, PsbI, PsbJ, PsbK, PsbL, PsbM, PsbT, PsbX, PsbY, PsbZ, Psb30/Ycf12, peripheral proteins PsbO, CyanoQ (PsbQ), PsbU, PsbV and a large number of cofactors. It forms dimeric complexes.

The protein localises to the cellular thylakoid membrane. In terms of biological role, loosely associated component of the core of photosystem II (PSII), it is not always seen in crystals. PSII is a light-driven water plastoquinone oxidoreductase, using light energy to abstract electrons from H(2)O, generating a proton gradient subsequently used for ATP formation. The chain is Photosystem II reaction center protein Y from Synechocystis sp. (strain ATCC 27184 / PCC 6803 / Kazusa).